The chain runs to 339 residues: Phenylalanine--tRNA ligase alpha subunit (339 aa).

Position 253 (Glu-253) interacts with Mg(2+).

This sequence belongs to the class-II aminoacyl-tRNA synthetase family. Phe-tRNA synthetase alpha subunit type 1 subfamily. In terms of assembly, tetramer of two alpha and two beta subunits. Requires Mg(2+) as cofactor.

It localises to the cytoplasm. The enzyme catalyses tRNA(Phe) + L-phenylalanine + ATP = L-phenylalanyl-tRNA(Phe) + AMP + diphosphate + H(+). The polypeptide is Phenylalanine--tRNA ligase alpha subunit (Thioalkalivibrio sulfidiphilus (strain HL-EbGR7)).